Here is a 266-residue protein sequence, read N- to C-terminus: Putative carbamate hydrolase RutD (266 aa).

Residues P14–L115 enclose the AB hydrolase-1 domain.

This sequence belongs to the AB hydrolase superfamily. Hydrolase RutD family.

The catalysed reaction is carbamate + 2 H(+) = NH4(+) + CO2. Its function is as follows. Involved in pyrimidine catabolism. May facilitate the hydrolysis of carbamate, a reaction that can also occur spontaneously. This chain is Putative carbamate hydrolase RutD, found in Shigella flexneri serotype X (strain 2002017).